The following is a 207-amino-acid chain: Urease accessory protein UreG (207 aa).

GTP is bound at residue 12 to 19 (GPVGAGKT).

This sequence belongs to the SIMIBI class G3E GTPase family. UreG subfamily. In terms of assembly, homodimer. UreD, UreF and UreG form a complex that acts as a GTP-hydrolysis-dependent molecular chaperone, activating the urease apoprotein by helping to assemble the nickel containing metallocenter of UreC. The UreE protein probably delivers the nickel.

It localises to the cytoplasm. In terms of biological role, facilitates the functional incorporation of the urease nickel metallocenter. This process requires GTP hydrolysis, probably effectuated by UreG. The sequence is that of Urease accessory protein UreG from Cereibacter sphaeroides (strain ATCC 17023 / DSM 158 / JCM 6121 / CCUG 31486 / LMG 2827 / NBRC 12203 / NCIMB 8253 / ATH 2.4.1.) (Rhodobacter sphaeroides).